The primary structure comprises 456 residues: IQ domain-containing protein IQM3 (456 aa).

The IQ domain maps to 46–75; the sequence is TRLAAVKVQKVYRSYRTRRRLADSVVVAEE. Positions 315 to 358 are disordered; that stretch reads SEDSDSYDDYVKSNGGSEPEPLKKEDTTFQAETETDENGNGTVG.

In terms of tissue distribution, expressed in roots, rosette and cauline leaves, flowers and siliques, and at lower levels in stems.

It is found in the cytoplasm. Its subcellular location is the nucleus. Functionally, may be involved in biotic and abiotic stress responses. The sequence is that of IQ domain-containing protein IQM3 from Arabidopsis thaliana (Mouse-ear cress).